We begin with the raw amino-acid sequence, 230 residues long: Acyl-protein thioesterase 1 (230 aa).

Active-site charge relay system residues include serine 119, aspartate 174, and histidine 208. Lysine 224 carries the N6-acetyllysine modification.

The protein belongs to the AB hydrolase superfamily. AB hydrolase 2 family. In terms of assembly, homodimer. In terms of tissue distribution, ubiquitous. Detected at low levels in all tissues tested.

The protein resides in the cytoplasm. It is found in the cell membrane. It localises to the nucleus membrane. Its subcellular location is the endoplasmic reticulum. It carries out the reaction S-hexadecanoyl-L-cysteinyl-[protein] + H2O = L-cysteinyl-[protein] + hexadecanoate + H(+). The catalysed reaction is 1-hexadecanoyl-sn-glycero-3-phosphocholine + H2O = sn-glycerol 3-phosphocholine + hexadecanoate + H(+). It catalyses the reaction a 1-(9Z-octadecenoyl)-2-acyl-sn-glycero-3-phosphocholine + H2O = a 2-acyl-sn-glycero-3-phosphocholine + (9Z)-octadecenoate + H(+). Functionally, acts as an acyl-protein thioesterase. Hydrolyzes fatty acids from S-acylated cysteine residues in proteins such as trimeric G alpha proteins or HRAS. Acts as a palmitoyl thioesterase that catalyzes depalmitoylation of proteins, such as ADRB2, KCNMA1 and SQSTM1. Acts as a negative regulator of autophagy by mediating palmitoylation of SQSTM1, decreasing affinity between SQSTM1 and ATG8 proteins and recruitment of ubiquitinated cargo proteins to autophagosomes. Acts as a lysophospholipase and hydrolyzes lysophosphatidylcholine (lyso-PC). Also hydrolyzes lysophosphatidylethanolamine (lyso-PE), lysophosphatidylinositol (lyso-PI) and lysophosphatidylserine (lyso-PS). Has much higher thioesterase activity than lysophospholipase activity. Contributes to the production of lysophosphatidic acid (LPA) during blood coagulation by recognizing and cleaving plasma phospholipids to generate lysophospholipids which in turn act as substrates for ENPP2 to produce LPA. This is Acyl-protein thioesterase 1 (Lypla1) from Rattus norvegicus (Rat).